The primary structure comprises 87 residues: RNA-binding protein Hfq (87 aa).

The 60-residue stretch at Asp-9 to Val-68 folds into the Sm domain. Residues Ala-65–Glu-87 are disordered. Residues His-71–Glu-87 are compositionally biased toward basic and acidic residues.

It belongs to the Hfq family.

Functionally, RNA chaperone that binds small regulatory RNA (sRNAs) and mRNAs to facilitate mRNA translational regulation in response to envelope stress, environmental stress and changes in metabolite concentrations. Also binds with high specificity to tRNAs. Essential for virulence in the suckling mouse model of cholera pathogenesis. In Vibrio cholerae serotype O1 (strain ATCC 39315 / El Tor Inaba N16961), this protein is RNA-binding protein Hfq.